The chain runs to 512 residues: 2-isopropylmalate synthase (512 aa).

Residues 4–266 form the Pyruvate carboxyltransferase domain; the sequence is IQFFDTTLRD…ETNIVLNQFK (263 aa). 4 residues coordinate Mn(2+): Asp13, His201, His203, and Asn237. Positions 390-512 are regulatory domain; the sequence is ELKHLQVQYV…SKQADFEEVK (123 aa).

It belongs to the alpha-IPM synthase/homocitrate synthase family. LeuA type 1 subfamily. As to quaternary structure, homodimer. Mn(2+) serves as cofactor.

Its subcellular location is the cytoplasm. The catalysed reaction is 3-methyl-2-oxobutanoate + acetyl-CoA + H2O = (2S)-2-isopropylmalate + CoA + H(+). Its pathway is amino-acid biosynthesis; L-leucine biosynthesis; L-leucine from 3-methyl-2-oxobutanoate: step 1/4. Functionally, catalyzes the condensation of the acetyl group of acetyl-CoA with 3-methyl-2-oxobutanoate (2-ketoisovalerate) to form 3-carboxy-3-hydroxy-4-methylpentanoate (2-isopropylmalate). This is 2-isopropylmalate synthase from Listeria monocytogenes serotype 4a (strain HCC23).